The sequence spans 391 residues: Acetylgalactosaminyl-O-glycosyl-glycoprotein beta-1,3-N-acetylglucosaminyltransferase (391 aa).

Residues 1-11 lie on the Cytoplasmic side of the membrane; the sequence is MALPSSRRFKS. A helical; Signal-anchor for type II membrane protein membrane pass occupies residues 12 to 32; it reads PTTLAFFLVGVTLVVLNQWFL. Topologically, residues 33–391 are lumenal; it reads QEHRQEKAKG…TAGEQNPDAH (359 aa). 2 N-linked (GlcNAc...) asparagine glycosylation sites follow: asparagine 68 and asparagine 191.

This sequence belongs to the glycosyltransferase 31 family.

Its subcellular location is the golgi apparatus membrane. It catalyses the reaction a 3-O-[N-acetyl-alpha-D-galactosaminyl]-L-threonyl-[protein] + UDP-N-acetyl-alpha-D-glucosamine = a 3-O-[N-acetyl-beta-D-glucosaminyl-(1-&gt;3)-N-acetyl-alpha-D-galactosaminyl]-L-threonyl-[protein] + UDP + H(+). The catalysed reaction is a 3-O-[N-acetyl-alpha-D-galactosaminyl]-L-seryl-[protein] + UDP-N-acetyl-alpha-D-glucosamine = 3-O-[N-acetyl-beta-D-glucosaminyl-(1-&gt;3)-N-acetyl-alpha-D-galactosaminyl]-L-seryl-[protein] + UDP + H(+). Its pathway is protein modification; protein glycosylation. In terms of biological role, beta-1,3-N-acetylglucosaminyltransferase that synthesizes the core 3 structure of the O-glycan, an important precursor in the biosynthesis of mucin-type glycoproteins. Plays an important role in the synthesis of mucin-type O-glycans in digestive organs. The protein is Acetylgalactosaminyl-O-glycosyl-glycoprotein beta-1,3-N-acetylglucosaminyltransferase (B3gnt6) of Mus musculus (Mouse).